The primary structure comprises 469 residues: Tubulin gamma-1 chain (469 aa).

142–148 is a binding site for GTP; sequence AGGTGSG.

Belongs to the tubulin family.

It localises to the cytoplasm. It is found in the cytoskeleton. The protein localises to the microtubule organizing center. Functionally, tubulin is the major constituent of microtubules. The gamma chain is found at microtubule organizing centers (MTOC) such as the spindle poles, suggesting that it is involved in the minus-end nucleation of microtubule assembly. This is Tubulin gamma-1 chain (TUBG1) from Zea mays (Maize).